A 469-amino-acid polypeptide reads, in one-letter code: Uronate isomerase (469 aa).

Belongs to the metallo-dependent hydrolases superfamily. Uronate isomerase family.

The catalysed reaction is D-glucuronate = D-fructuronate. The enzyme catalyses aldehydo-D-galacturonate = keto-D-tagaturonate. Its pathway is carbohydrate metabolism; pentose and glucuronate interconversion. The protein is Uronate isomerase of Yersinia pseudotuberculosis serotype O:1b (strain IP 31758).